Consider the following 92-residue polypeptide: Small ribosomal subunit protein uS19c (92 aa).

It belongs to the universal ribosomal protein uS19 family.

The protein localises to the plastid. The protein resides in the chloroplast. Its function is as follows. Protein S19 forms a complex with S13 that binds strongly to the 16S ribosomal RNA. This is Small ribosomal subunit protein uS19c from Amborella trichopoda.